Here is a 138-residue protein sequence, read N- to C-terminus: Acidic phospholipase A2 Ts-A1 (138 aa).

The signal sequence occupies residues M1–G16. 7 disulfides stabilise this stretch: C42–C131, C44–C60, C59–C111, C65–C138, C66–C104, C73–C97, and C91–C102. Ca(2+) is bound by residues F43, G45, and G47. H63 is an active-site residue. Residue D64 coordinates Ca(2+). Residue D105 is part of the active site.

The cofactor is Ca(2+). Expressed by the venom gland.

It localises to the secreted. It carries out the reaction a 1,2-diacyl-sn-glycero-3-phosphocholine + H2O = a 1-acyl-sn-glycero-3-phosphocholine + a fatty acid + H(+). Functionally, snake venom phospholipase A2 (PLA2) that shows a moderate inhibition of ADP-induced human platelet aggregation when tested on platelet rich plasma. Exhibits high hydrolytic activities and prefers the anionic micelles (dPPC with deoxycholate) to the zwitterionic micelles (dPPC with Triton X-100). PLA2 catalyzes the calcium-dependent hydrolysis of the 2-acyl groups in 3-sn-phosphoglycerides. In Trimeresurus stejnegeri (Chinese green tree viper), this protein is Acidic phospholipase A2 Ts-A1.